We begin with the raw amino-acid sequence, 691 residues long: Hormonally up-regulated neu tumor-associated kinase homolog A (691 aa).

The 259-residue stretch at 55–313 (YLIGRKLGEG…IQQALANRWL (259 aa)) folds into the Protein kinase domain. Residues 61–69 (LGEGSFAKV) and lysine 84 each bind ATP. The active-site Proton acceptor is the aspartate 179. The segment covering 406–425 (MNKNSYEERRSKDLEKRGEP) has biased composition (basic and acidic residues). Disordered stretches follow at residues 406–475 (MNKN…GGLS), 499–518 (QSPD…HSQE), 580–640 (FQFD…SRGR), and 655–679 (QVVS…SPGY). Residues 440–453 (SHRQNACLTPQGHS) show a composition bias toward polar residues. The segment covering 457–470 (PVKERRSSKSERES) has biased composition (basic and acidic residues). Residues 582 to 597 (FDNTSPSKSHFNQASF) are compositionally biased toward polar residues. The segment covering 604-620 (SPSSPESMSPTSPHSPS) has biased composition (low complexity). A compositionally biased stretch (polar residues) spans 621–631 (CNNNISGNLGS).

The protein belongs to the protein kinase superfamily. CAMK Ser/Thr protein kinase family. SNF1 subfamily.

It catalyses the reaction L-seryl-[protein] + ATP = O-phospho-L-seryl-[protein] + ADP + H(+). It carries out the reaction L-threonyl-[protein] + ATP = O-phospho-L-threonyl-[protein] + ADP + H(+). This Xenopus laevis (African clawed frog) protein is Hormonally up-regulated neu tumor-associated kinase homolog A (hunk-a).